The sequence spans 274 residues: MSFVALIPARAASIRLPDKPLADIAGKPMVVRVAERAALSGASLVCVATDDTRVERAVTEHGFPAVRTLSSHPTGTDRLAEAVRILGLPGDAIVVNVQGDEPLIEPTLIDGVAQLLADNPQADIATCACPLTDAQALFNPNVVKVVCGNDGRALYFSRAPIPWARDALAGGERMLAPGLPAWHHIGLYAYRVSFLQRFPTLAQGELERFESLEQLRAMEHGHTIVVSRISAAPAAGVDTPADLDRVRAIYLQAPKTEANQGLIQVQSDQGNDGR.

This sequence belongs to the KdsB family.

It is found in the cytoplasm. It carries out the reaction 3-deoxy-alpha-D-manno-oct-2-ulosonate + CTP = CMP-3-deoxy-beta-D-manno-octulosonate + diphosphate. The protein operates within nucleotide-sugar biosynthesis; CMP-3-deoxy-D-manno-octulosonate biosynthesis; CMP-3-deoxy-D-manno-octulosonate from 3-deoxy-D-manno-octulosonate and CTP: step 1/1. It functions in the pathway bacterial outer membrane biogenesis; lipopolysaccharide biosynthesis. Activates KDO (a required 8-carbon sugar) for incorporation into bacterial lipopolysaccharide in Gram-negative bacteria. This Bordetella avium (strain 197N) protein is 3-deoxy-manno-octulosonate cytidylyltransferase.